A 284-amino-acid polypeptide reads, in one-letter code: Tropomyosin-1 (284 aa).

Positions 1-284 form a coiled coil; the sequence is MDAIKKKMLA…DSTFAELAGY (284 aa). Positions 103 to 131 are disordered; the sequence is EERLQSATEKLEEASKAADESERGRKVLE.

The protein belongs to the tropomyosin family. Homodimer.

Its function is as follows. Tropomyosin, in association with the troponin complex, plays a central role in the calcium dependent regulation of muscle contraction. The protein is Tropomyosin-1 of Biomphalaria glabrata (Bloodfluke planorb).